The primary structure comprises 378 residues: Acetylornithine deacetylase (378 aa).

His76 lines the Zn(2+) pocket. Residue Asp78 is part of the active site. Asp108 is a Zn(2+) binding site. Glu140 is an active-site residue. Zn(2+)-binding residues include Glu141, Glu165, and His351.

The protein belongs to the peptidase M20A family. ArgE subfamily. Homodimer. It depends on Zn(2+) as a cofactor. Co(2+) is required as a cofactor. The cofactor is glutathione.

The protein localises to the cytoplasm. The enzyme catalyses N(2)-acetyl-L-ornithine + H2O = L-ornithine + acetate. The protein operates within amino-acid biosynthesis; L-arginine biosynthesis; L-ornithine from N(2)-acetyl-L-ornithine (linear): step 1/1. Catalyzes the hydrolysis of the amide bond of N(2)-acetylated L-amino acids. Cleaves the acetyl group from N-acetyl-L-ornithine to form L-ornithine, an intermediate in L-arginine biosynthesis pathway, and a branchpoint in the synthesis of polyamines. This chain is Acetylornithine deacetylase, found in Aliivibrio salmonicida (strain LFI1238) (Vibrio salmonicida (strain LFI1238)).